Consider the following 200-residue polypeptide: GTP cyclohydrolase-2 (200 aa).

49 to 53 (RVHSE) is a GTP binding site. Positions 54, 65, and 67 each coordinate Zn(2+). GTP contacts are provided by residues Gln70, 92 to 94 (EGR), and Thr114. Asp126 (proton acceptor) is an active-site residue. Arg128 serves as the catalytic Nucleophile. Residues Thr149 and Lys154 each contribute to the GTP site.

The protein belongs to the GTP cyclohydrolase II family. Homodimer. Zn(2+) serves as cofactor.

The catalysed reaction is GTP + 4 H2O = 2,5-diamino-6-hydroxy-4-(5-phosphoribosylamino)-pyrimidine + formate + 2 phosphate + 3 H(+). The protein operates within cofactor biosynthesis; riboflavin biosynthesis; 5-amino-6-(D-ribitylamino)uracil from GTP: step 1/4. Functionally, catalyzes the conversion of GTP to 2,5-diamino-6-ribosylamino-4(3H)-pyrimidinone 5'-phosphate (DARP), formate and pyrophosphate. This Klebsiella pneumoniae (strain 342) protein is GTP cyclohydrolase-2.